The primary structure comprises 486 residues: N-succinylglutamate 5-semialdehyde dehydrogenase (486 aa).

220 to 225 (GSSRTG) is an NAD(+) binding site. Active-site residues include glutamate 243 and cysteine 277.

The protein belongs to the aldehyde dehydrogenase family. AstD subfamily.

It carries out the reaction N-succinyl-L-glutamate 5-semialdehyde + NAD(+) + H2O = N-succinyl-L-glutamate + NADH + 2 H(+). Its pathway is amino-acid degradation; L-arginine degradation via AST pathway; L-glutamate and succinate from L-arginine: step 4/5. Catalyzes the NAD-dependent reduction of succinylglutamate semialdehyde into succinylglutamate. In Shewanella baltica (strain OS223), this protein is N-succinylglutamate 5-semialdehyde dehydrogenase.